The chain runs to 430 residues: Histidinol dehydrogenase (430 aa).

Substrate is bound by residues Ser237, Gln259, and His262. Positions 259 and 262 each coordinate Zn(2+). Residues Glu327 and His328 each act as proton acceptor in the active site. Substrate is bound by residues His328, Asp361, Glu415, and His420. Asp361 serves as a coordination point for Zn(2+). Residue His420 participates in Zn(2+) binding.

Belongs to the histidinol dehydrogenase family. Zn(2+) is required as a cofactor.

It carries out the reaction L-histidinol + 2 NAD(+) + H2O = L-histidine + 2 NADH + 3 H(+). Its pathway is amino-acid biosynthesis; L-histidine biosynthesis; L-histidine from 5-phospho-alpha-D-ribose 1-diphosphate: step 9/9. Its function is as follows. Catalyzes the sequential NAD-dependent oxidations of L-histidinol to L-histidinaldehyde and then to L-histidine. In Mesorhizobium japonicum (strain LMG 29417 / CECT 9101 / MAFF 303099) (Mesorhizobium loti (strain MAFF 303099)), this protein is Histidinol dehydrogenase.